The chain runs to 38 residues: Potassium channel toxin alpha-KTx 2.13 (38 aa).

3 disulfides stabilise this stretch: Cys7–Cys29, Cys13–Cys34, and Cys17–Cys36.

This sequence belongs to the short scorpion toxin superfamily. Potassium channel inhibitor family. Alpha-KTx 02 subfamily. In terms of tissue distribution, expressed by the venom gland.

The protein resides in the secreted. Functionally, selective inhibitor of voltage-gated potassium channels, blocks the Kv1.2/KCNA2 (Kd=1.3 nM) and Kv1.3/KCNA3 (Kd=7.2 nM) channels. Association and dissociation rates of the toxin are slower for Kv1.2/KCNA2 than for Kv1.3/KCNA3. The chain is Potassium channel toxin alpha-KTx 2.13 from Centruroides suffusus (Durango bark scorpion).